Here is a 651-residue protein sequence, read N- to C-terminus: UvrABC system protein C (651 aa).

Residues 21–100 enclose the GIY-YIG domain; it reads TEPGCYLMRD…IKNQQPHFNV (80 aa). One can recognise a UVR domain in the interval 210 to 245; it reads DELRQLLNQQMERYAERLDFESAARIRDQLQGIDQL.

Belongs to the UvrC family. As to quaternary structure, interacts with UvrB in an incision complex.

The protein resides in the cytoplasm. The UvrABC repair system catalyzes the recognition and processing of DNA lesions. UvrC both incises the 5' and 3' sides of the lesion. The N-terminal half is responsible for the 3' incision and the C-terminal half is responsible for the 5' incision. The chain is UvrABC system protein C from Synechococcus sp. (strain CC9311).